We begin with the raw amino-acid sequence, 288 residues long: Glandicoline B O-methyltransferase roqN (288 aa).

S-adenosyl-L-methionine is bound by residues Thr-57, Asp-82, and 109–110; that span reads DA.

It belongs to the class I-like SAM-binding methyltransferase superfamily.

The catalysed reaction is glandicoline B + S-adenosyl-L-methionine = meleagrin + S-adenosyl-L-homocysteine + H(+). The protein operates within alkaloid biosynthesis. Its function is as follows. Glandicoline B O-methyltransferase; part of the gene cluster that mediates the biosynthesis of the mycotoxin meleagrin. The first stage is catalyzed by the dipeptide synthase roqA which condenses histidine and tryptophan to produce histidyltryptophanyldiketopiperazine (HTD). HTD is then converted to roquefortine C through two possible pathways. In the first pathway, prenyltransferase roqD transforms HTD to the intermediate roquefortine D, which is in turn converted to roquefortine C by the cytochrome P450 monooxygenase roqR. In the second pathway, HTD is first converted to the intermediate dehydrohistidyltryptophanyldi-ketopiperazine (DHTD) by roqR which is then prenylated by roqD to form roquefortine C. Roquefortine C can be further transformed to meleagrin via three more reactions including oxydation to glandicolin A by roqM, which is further reduced to glandicoline B by roqO. Finally, glandicoline B is converted to meleagrin by the glandicoline B O-methyltransferase roqN. More studies identified further branching and additional metabolites produced by the roquefortine/meleagrin cluster, including roquefortine F, roquefortine L, roquefortine M, roquefortine N and neoxaline. The chain is Glandicoline B O-methyltransferase roqN from Penicillium rubens (strain ATCC 28089 / DSM 1075 / NRRL 1951 / Wisconsin 54-1255) (Penicillium chrysogenum).